The chain runs to 134 residues: Ribosome-binding factor A (134 aa).

A disordered region spans residues 115-134 (EDQRQERGEIPPGSDELQPD).

The protein belongs to the RbfA family. In terms of assembly, monomer. Binds 30S ribosomal subunits, but not 50S ribosomal subunits or 70S ribosomes.

It is found in the cytoplasm. In terms of biological role, one of several proteins that assist in the late maturation steps of the functional core of the 30S ribosomal subunit. Associates with free 30S ribosomal subunits (but not with 30S subunits that are part of 70S ribosomes or polysomes). Required for efficient processing of 16S rRNA. May interact with the 5'-terminal helix region of 16S rRNA. This chain is Ribosome-binding factor A, found in Synechococcus sp. (strain CC9902).